A 336-amino-acid chain; its full sequence is USG-1 protein homolog (336 aa).

Belongs to the aspartate-semialdehyde dehydrogenase family.

In Pseudomonas aeruginosa (strain ATCC 15692 / DSM 22644 / CIP 104116 / JCM 14847 / LMG 12228 / 1C / PRS 101 / PAO1), this protein is USG-1 protein homolog (usg).